The following is a 185-amino-acid chain: Ribosome-recycling factor (185 aa).

This sequence belongs to the RRF family.

It localises to the cytoplasm. In terms of biological role, responsible for the release of ribosomes from messenger RNA at the termination of protein biosynthesis. May increase the efficiency of translation by recycling ribosomes from one round of translation to another. The sequence is that of Ribosome-recycling factor from Nitrosomonas europaea (strain ATCC 19718 / CIP 103999 / KCTC 2705 / NBRC 14298).